The following is a 124-amino-acid chain: Large ribosomal subunit protein uL22c (124 aa).

Belongs to the universal ribosomal protein uL22 family. Part of the 50S ribosomal subunit.

It is found in the plastid. Its subcellular location is the chloroplast. Functionally, this protein binds specifically to 23S rRNA. In terms of biological role, the globular domain of the protein is located near the polypeptide exit tunnel on the outside of the subunit, while an extended beta-hairpin is found that lines the wall of the exit tunnel in the center of the 70S ribosome. This is Large ribosomal subunit protein uL22c (rpl22) from Amborella trichopoda.